Consider the following 85-residue polypeptide: UPF0335 protein Oant_1161 (85 aa).

The protein belongs to the UPF0335 family.

The polypeptide is UPF0335 protein Oant_1161 (Brucella anthropi (strain ATCC 49188 / DSM 6882 / CCUG 24695 / JCM 21032 / LMG 3331 / NBRC 15819 / NCTC 12168 / Alc 37) (Ochrobactrum anthropi)).